Here is a 695-residue protein sequence, read N- to C-terminus: Probable glucan endo-1,3-beta-glucosidase btgC (695 aa).

Disordered regions lie at residues 1–53 (MSGP…THHG), 117–140 (RRGT…GSDN), 175–258 (GPAG…RSQA), and 286–314 (ETSY…STGS). Over 1–317 (MSGPHRTFSF…PKPSTGSRKR (317 aa)) the chain is Cytoplasmic. Residues 36–45 (PISNMSSSPG) show a composition bias toward polar residues. Residues 188–198 (HLGTSNSSQRN) show a composition bias toward polar residues. Residues 231–241 (NPEEIADDGDD) are compositionally biased toward acidic residues. Residues 318-338 (GWIIGAILAVIIIGAIVGGAV) traverse the membrane as a helical; Signal-anchor for type II membrane protein segment. Residues 339–695 (GGTIGHKDSG…IPDCGGKTAA (357 aa)) are Extracellular-facing. A disordered region spans residues 346–372 (DSGDSASGSSASTQSASGDTDTNGDLD). Residues 349–366 (DSASGSSASTQSASGDTD) show a composition bias toward low complexity. N-linked (GlcNAc...) asparagine glycosylation is found at Asn-415, Asn-438, and Asn-466. Catalysis depends on Glu-498, which acts as the Proton donor. The active-site Nucleophile is Glu-597. N-linked (GlcNAc...) asparagine glycosylation is present at Asn-642.

The protein belongs to the glycosyl hydrolase 17 family.

It localises to the cell membrane. The catalysed reaction is Hydrolysis of (1-&gt;3)-beta-D-glucosidic linkages in (1-&gt;3)-beta-D-glucans.. Its function is as follows. Glucanases play a role in cell expansion during growth, in cell-cell fusion during mating, and in spore release during sporulation. This enzyme may be involved in beta-glucan degradation. Active on laminarin and lichenan. This Aspergillus clavatus (strain ATCC 1007 / CBS 513.65 / DSM 816 / NCTC 3887 / NRRL 1 / QM 1276 / 107) protein is Probable glucan endo-1,3-beta-glucosidase btgC (btgC).